The chain runs to 198 residues: Riboflavin synthase (198 aa).

2 Lumazine-binding repeats span residues 1 to 95 and 96 to 188; these read MFSG…IGGH and FVSG…VDTV. 2,4-dihydroxypteridine is bound by residues 4–6, 46–48, 60–65, 99–101, Lys130, 139–141, and 153–158; these read GII, CLT, DVTEET, GHV, SLT, and SVIPET.

Homotrimer.

It carries out the reaction 2 6,7-dimethyl-8-(1-D-ribityl)lumazine + H(+) = 5-amino-6-(D-ribitylamino)uracil + riboflavin. The protein operates within cofactor biosynthesis; riboflavin biosynthesis; riboflavin from 2-hydroxy-3-oxobutyl phosphate and 5-amino-6-(D-ribitylamino)uracil: step 2/2. Functionally, catalyzes the dismutation of two molecules of 6,7-dimethyl-8-ribityllumazine, resulting in the formation of riboflavin and 5-amino-6-(D-ribitylamino)uracil. The protein is Riboflavin synthase (ribE) of Chlamydia muridarum (strain MoPn / Nigg).